Here is a 440-residue protein sequence, read N- to C-terminus: Alpha-ionylideneethane synthase aba3 (440 aa).

It belongs to the alpha-ionylideneethane synthase family.

It functions in the pathway hormone biosynthesis. Functionally, alpha-ionylideneethane synthase; part of the gene cluster that mediates the biosynthesis of abscisic acid (ABA), a phytohormone that acts antagonistically toward salicylic acid (SA), jasmonic acid (JA) and ethylene (ETH) signaling, to impede plant defense responses. The first step of the pathway catalyzes the reaction from farnesyl diphosphate to alpha-ionylideneethane performed by the alpha-ionylideneethane synthase aba3 via a three-step reaction mechanism involving 2 neutral intermediates, beta-farnesene and allofarnesene. The cytochrome P450 monooxygenase aba1 might then be involved in the conversion of alpha-ionylideneethane to alpha-ionylideneacetic acid. Alpha-ionylideneacetic acid is further converted to abscisic acid in 2 steps involving the cytochrome P450 monooxygenase aba2 and the short-chain dehydrogenase/reductase aba4, via the intermediates 1'-deoxy-ABA or 1',4'-trans-diol-ABA, depending on the order of action of these 2 enzymes. Aba2 is responsible for the hydroxylation of carbon atom C-1' and aba4 might be involved in the oxidation of the C-4' carbon atom. This is Alpha-ionylideneethane synthase aba3 from Botryotinia fuckeliana (strain B05.10) (Noble rot fungus).